A 154-amino-acid chain; its full sequence is Fluoride-specific ion channel FluC 1 (154 aa).

The next 4 helical transmembrane spans lie at 28–48, 59–79, 91–111, and 124–144; these read VVAVVALGGGTGAAARYAASL, WTTFGVNAVGCAVIGVFMVVI, PFFGTGVLGGFTTFSTYAVDS, and LAYLAATPLAALTAVWLAAWA. Positions 99 and 102 each coordinate Na(+).

It belongs to the fluoride channel Fluc/FEX (TC 1.A.43) family.

It is found in the cell membrane. The enzyme catalyses fluoride(in) = fluoride(out). Na(+) is not transported, but it plays an essential structural role and its presence is essential for fluoride channel function. Its function is as follows. Fluoride-specific ion channel. Important for reducing fluoride concentration in the cell, thus reducing its toxicity. The sequence is that of Fluoride-specific ion channel FluC 1 from Streptomyces coelicolor (strain ATCC BAA-471 / A3(2) / M145).